Reading from the N-terminus, the 23-residue chain is Toxin Acra2 (23 aa).

Residues 2–23 form the LCN-type CS-alpha/beta domain; it reads KDGYIVDSNGCAPECFPTNXGC.

Post-translationally, contains 4 disulfide bonds. In terms of tissue distribution, expressed by the venom gland.

The protein resides in the secreted. Its function is as follows. Excitatory insect toxins induce a spastic paralysis. They bind voltage-independently at site-4 of sodium channels (Nav) and shift the voltage of activation toward more negative potentials thereby affecting sodium channel activation and promoting spontaneous and repetitive firing. Is lethal to mice. Is about 1% of the total protein in the venom. The chain is Toxin Acra2 from Androctonus crassicauda (Arabian fat-tailed scorpion).